A 325-amino-acid chain; its full sequence is Tetraacyldisaccharide 4'-kinase (325 aa).

55–62 (TAGGNGKT) is an ATP binding site.

This sequence belongs to the LpxK family.

The catalysed reaction is a lipid A disaccharide + ATP = a lipid IVA + ADP + H(+). It functions in the pathway glycolipid biosynthesis; lipid IV(A) biosynthesis; lipid IV(A) from (3R)-3-hydroxytetradecanoyl-[acyl-carrier-protein] and UDP-N-acetyl-alpha-D-glucosamine: step 6/6. Its function is as follows. Transfers the gamma-phosphate of ATP to the 4'-position of a tetraacyldisaccharide 1-phosphate intermediate (termed DS-1-P) to form tetraacyldisaccharide 1,4'-bis-phosphate (lipid IVA). The polypeptide is Tetraacyldisaccharide 4'-kinase (Salmonella arizonae (strain ATCC BAA-731 / CDC346-86 / RSK2980)).